The primary structure comprises 53 residues: Membrane antigen containing repeating peptides (53 aa).

6 tandem repeats follow at residues 1-10, 11-20, 21-30, 31-40, 41-50, and 51-53. The 6 X 10 AA tandem repeats stretch occupies residues 1–53; the sequence is EAEEAARLQAEAEEAARQQAEAEEAARLQAEAEEAARLQAEAEEAARLQAEAE. The segment at 1–53 is disordered; that stretch reads EAEEAARLQAEAEEAARQQAEAEEAARLQAEAEEAARLQAEAEEAARLQAEAE.

It is found in the membrane. The sequence is that of Membrane antigen containing repeating peptides from Leishmania major.